The following is a 576-amino-acid chain: N-acetylmuramoyl-L-alanine amidase (576 aa).

The signal sequence occupies residues M1–A21. An N-linked (GlcNAc...) asparagine glycan is attached at N77. The residue at position 239 (S239) is a Phosphoserine. A deamidated asparagine mark is found at N274 and N322. Residue N367 is glycosylated (N-linked (GlcNAc...) asparagine). The region spanning F406–G532 is the N-acetylmuramoyl-L-alanine amidase domain. H410 provides a ligand contact to Zn(2+). A disulfide bridge links C419 with C425. Residue N485 is glycosylated (N-linked (GlcNAc...) asparagine). Zn(2+) is bound by residues H522 and C530. The interval K550 to Q576 is disordered.

The protein belongs to the N-acetylmuramoyl-L-alanine amidase 2 family. It depends on Zn(2+) as a cofactor. Strongly expressed in liver and fetal liver, and secreted into serum. Expressed to a much lesser extent in transverse colon, lymph nodes, heart, thymus, pancreas, descending colon, stomach and testis. Isoform 2 is not detected in the liver or serum.

It localises to the secreted. Its subcellular location is the membrane. The enzyme catalyses Hydrolyzes the link between N-acetylmuramoyl residues and L-amino acid residues in certain cell-wall glycopeptides.. May play a scavenger role by digesting biologically active peptidoglycan (PGN) into biologically inactive fragments. Has no direct bacteriolytic activity. The chain is N-acetylmuramoyl-L-alanine amidase (PGLYRP2) from Homo sapiens (Human).